Reading from the N-terminus, the 1270-residue chain is Myosin-3 (1270 aa).

The tract at residues 1-20 (MAVIKKGARRKDVKEPKKRS) is disordered. One can recognise a Myosin motor domain in the interval 36–715 (VGVSDLTLLS…SLFALEDMRD (680 aa)). ATP is bound at residue 129–136 (GESGAGKT). Serine 357 bears the Phosphoserine mark. The tract at residues 404 to 486 (SIGILDIYGF…PGILAAMNDS (83 aa)) is actin-binding. IQ domains follow at residues 719–739 (YNMAARIQRAWRRFLQRRIDA) and 740–765 (AIKIQRTIREKKGGNKYVKLRDYGTK). In terms of domain architecture, TH1 spans 771–961 (KERRSMSLLG…TIYVRRGHPA (191 aa)). Disordered stretches follow at residues 951–1015 (STIY…QKPV), 1029–1136 (YNPK…GSSS), and 1215–1270 (VQFG…DDDW). A compositionally biased stretch (basic residues) spans 980–1000 (IKSKKSKHKSTHKHTHSHRSH). Positions 1066–1078 (KKASSSHKSSSAK) are enriched in low complexity. Basic and acidic residues predominate over residues 1089 to 1098 (GVEKNKEPLK). The segment covering 1107–1116 (PIPPPPPPMG) has biased composition (pro residues). The SH3 domain maps to 1118-1180 (PKDPKFEAAY…PTAYMTPYKD (63 aa)). Over residues 1215–1234 (VQFGSATVGPTSDNQSNPVG) the composition is skewed to polar residues. Acidic residues predominate over residues 1256-1270 (ADDDDNDDGDDDDDW).

It belongs to the TRAFAC class myosin-kinesin ATPase superfamily. Myosin family. As to quaternary structure, interacts (via myosin motor domain) with SHE4; this interaction is important for proper localization and may regulate the interaction of the motor domain with actin. Interacts (via SH3 domain) with VRP1; this interaction is required for localization to sites of polarized growth and may regulate the interaction of the tail domain with actin. Interacts (via SH3 domain) with PAN1; this interaction is important for late stages of endocytopsis. Interacts (via SH3 domain) with BBC1 and LAS17. Interacts (via C-terminal acidic tail) with ARC19 and ARC40; ARC19 and ARC40 are Arp2/3 complex subunits. Post-translationally, phosphorylation of the TEDS site (Ser-357) is required for the polarization of the actin cytoskeleton and for ligand-induced, but not for constitutive internalization of STE2. Phosphorylation probably activates the myosin-I ATPase. Ser-357 is phosphorylated by CLA4 and STE20 in vitro.

It is found in the cytoplasm. The protein localises to the cytoskeleton. The protein resides in the actin patch. Its function is as follows. One of two redundant type-I myosins implicated in the organization of the actin cytoskeleton. Required for proper actin cytoskeleton polarization and for the internalization step in endocytosis. At the cell cortex, assembles in patch-like structures together with proteins from the actin-polymerizing machinery and promotes actin assembly. Functions redundantly with LAS17 as actin nucleation-promoting factor (NPF) for the Arp2/3 complex. Motor domain phosphorylation by PAK kinases CLA4 and STE20 promotes CDC42-regulated actin assembly. Functions together with the NPF PAN1 in late stages of endocytosis. Motor domain phosphorylation by PDK1 kinases PKH1 and PKH2, and by SGK kinases YPK1 and YPK2, promotes ligand-induced, but not constitutive endocytosis of the G protein-coupled receptor STE2. In Saccharomyces cerevisiae (strain YJM789) (Baker's yeast), this protein is Myosin-3 (MYO3).